A 345-amino-acid chain; its full sequence is Guanine nucleotide-binding protein G(i) subunit alpha-3 (345 aa).

Positions K23–Y345 constitute a G-alpha domain. The segment at K26–T39 is G1 motif. GTP is bound by residues G33, E34, S35, G36, K37, S38, T39, D141, S142, L166, R167, T168, R169, V170, K171, T172, V192, G194, N260, K261, D263, L264, C316, A317, and T318. S38 lines the Mg(2+) pocket. The G2 motif stretch occupies residues D164–T172. Residue T172 participates in Mg(2+) binding. Residues F187 to R196 form a G3 motif region. The tract at residues I256–D263 is G4 motif. Residues T315–T320 are G5 motif.

It belongs to the G-alpha family. G(i/o/t/z) subfamily. As to quaternary structure, heterotrimeric G proteins are composed of 3 units; alpha, beta and gamma. The alpha subunit contains the guanine nucleotide binding site. GTP binding causes dissociation of the heterotrimer, liberating the individual subunits so that they can interact with downstream effector proteins.

It localises to the cytoplasm. Its subcellular location is the cell membrane. It is found in the cytoskeleton. The protein localises to the microtubule organizing center. The protein resides in the centrosome. It localises to the membrane. Its function is as follows. Heterotrimeric guanine nucleotide-binding proteins (G proteins) function as transducers downstream of G protein-coupled receptors (GPCRs) in numerous signaling cascades. The alpha chain contains the guanine nucleotide binding site and alternates between an active, GTP-bound state and an inactive, GDP-bound state. Signaling by an activated GPCR promotes GDP release and GTP binding. The alpha subunit has a low GTPase activity that converts bound GTP to GDP, thereby terminating the signal. Both GDP release and GTP hydrolysis are modulated by numerous regulatory proteins. Signaling is mediated via effector proteins, such as adenylate cyclase. Inhibits adenylate cyclase activity, leading to decreased intracellular cAMP levels. Stimulates the activity of receptor-regulated K(+) channels. The active GTP-bound form prevents the association of RGS14 with centrosomes and is required for the translocation of RGS14 from the cytoplasm to the plasma membrane. May play a role in cell division. The active GTP-bound form activates the calcium permeant TRPC5 ion channels. The polypeptide is Guanine nucleotide-binding protein G(i) subunit alpha-3 (gnai3) (Xenopus laevis (African clawed frog)).